A 299-amino-acid chain; its full sequence is Bifunctional protein FolD 2 (299 aa).

NADP(+)-binding positions include Gly-168–Ser-170, Ser-193, and Ile-234.

Belongs to the tetrahydrofolate dehydrogenase/cyclohydrolase family. Homodimer.

It carries out the reaction (6R)-5,10-methylene-5,6,7,8-tetrahydrofolate + NADP(+) = (6R)-5,10-methenyltetrahydrofolate + NADPH. The catalysed reaction is (6R)-5,10-methenyltetrahydrofolate + H2O = (6R)-10-formyltetrahydrofolate + H(+). The protein operates within one-carbon metabolism; tetrahydrofolate interconversion. Its function is as follows. Catalyzes the oxidation of 5,10-methylenetetrahydrofolate to 5,10-methenyltetrahydrofolate and then the hydrolysis of 5,10-methenyltetrahydrofolate to 10-formyltetrahydrofolate. This is Bifunctional protein FolD 2 from Rhizobium meliloti (strain 1021) (Ensifer meliloti).